Consider the following 493-residue polypeptide: Cytochrome P450 2E1 (493 aa).

Residue 298 to 303 (FAGTET) participates in substrate binding. Cys-437 is a binding site for heme.

This sequence belongs to the cytochrome P450 family. Interacts with chaperones HSP70 and HSP90; this interaction is required for initial targeting to mitochondria. Requires heme as cofactor.

The protein resides in the endoplasmic reticulum membrane. It is found in the microsome membrane. It localises to the mitochondrion inner membrane. The enzyme catalyses an organic molecule + reduced [NADPH--hemoprotein reductase] + O2 = an alcohol + oxidized [NADPH--hemoprotein reductase] + H2O + H(+). It carries out the reaction (5Z,8Z,11Z)-eicosatrienoate + reduced [NADPH--hemoprotein reductase] + O2 = 19-hydroxy-(5Z,8Z,11Z)-eicosatrienoate + oxidized [NADPH--hemoprotein reductase] + H2O + H(+). It catalyses the reaction (5Z,8Z,11Z,14Z,17Z)-eicosapentaenoate + reduced [NADPH--hemoprotein reductase] + O2 = 19-hydroxy-(5Z,8Z,11Z,14Z,17Z)-eicosapentaenoate + oxidized [NADPH--hemoprotein reductase] + H2O + H(+). The catalysed reaction is (4Z,7Z,10Z,13Z,16Z,19Z)-docosahexaenoate + reduced [NADPH--hemoprotein reductase] + O2 = 21-hydroxy-(4Z,7Z,10Z,13Z,16Z,19Z)-docosahexaenoate + oxidized [NADPH--hemoprotein reductase] + H2O + H(+). The enzyme catalyses dodecanoate + reduced [NADPH--hemoprotein reductase] + O2 = 11-hydroxydodecanoate + oxidized [NADPH--hemoprotein reductase] + H2O + H(+). It carries out the reaction tetradecanoate + reduced [NADPH--hemoprotein reductase] + O2 = 13-hydroxytetradecanoate + oxidized [NADPH--hemoprotein reductase] + H2O + H(+). It catalyses the reaction 4-nitrophenol + NADPH + O2 + H(+) = 4-nitrocatechol + NADP(+) + H2O. It participates in lipid metabolism; fatty acid metabolism. With respect to regulation, the omega-1 hydroxylase activity is stimulated by cytochrome b5. Its function is as follows. A cytochrome P450 monooxygenase involved in the metabolism of fatty acids. Mechanistically, uses molecular oxygen inserting one oxygen atom into a substrate, and reducing the second into a water molecule, with two electrons provided by NADPH via cytochrome P450 reductase (NADPH--hemoprotein reductase). Catalyzes the hydroxylation of carbon-hydrogen bonds. Hydroxylates fatty acids specifically at the omega-1 position displaying the highest catalytic activity for saturated fatty acids. May be involved in the oxidative metabolism of xenobiotics. This chain is Cytochrome P450 2E1 (CYP2E1), found in Mesocricetus auratus (Golden hamster).